The following is a 327-amino-acid chain: DNA-directed RNA polymerase subunit alpha (327 aa).

Residues 1-233 (MVREKVKVST…NLFIPFLHVE (233 aa)) are alpha N-terminal domain (alpha-NTD). Residues 267 to 327 (LAFQYIFIDQ…KKILDILEKK (61 aa)) form an alpha C-terminal domain (alpha-CTD) region.

This sequence belongs to the RNA polymerase alpha chain family. In terms of assembly, in plastids the minimal PEP RNA polymerase catalytic core is composed of four subunits: alpha, beta, beta', and beta''. When a (nuclear-encoded) sigma factor is associated with the core the holoenzyme is formed, which can initiate transcription.

It localises to the plastid. The protein localises to the chloroplast. The enzyme catalyses RNA(n) + a ribonucleoside 5'-triphosphate = RNA(n+1) + diphosphate. Its function is as follows. DNA-dependent RNA polymerase catalyzes the transcription of DNA into RNA using the four ribonucleoside triphosphates as substrates. This chain is DNA-directed RNA polymerase subunit alpha, found in Nasturtium officinale (Watercress).